The primary structure comprises 431 residues: MRRLRRLVHLVLLCPFSKGLQGRLPGLRVKYVLLVWLGIFVGSWMVYVHYSSYSELCRGHVCQVVICDQYRKGIISGSVCQDLCELQKVEWRTCLSSAPGQQVYSGLWQDKEVTIKCGIEEALNSKAWPDAAPRRELVLFDKPTRGTSIKEFREMTLSFLKANLGDLPSLPALVDQILLMADFNKDSRVSLAEAKSVWALLQRNEFLLLLSLQEKEHASRLLGYCGDLYLTEGIPHGSWHGAVLLPALRPLLPSVLHRALQQWFGPAWPWRAKIAIGLLEFVEELFHGSYGTFYMCETTLANVGYTATYDFKMADLQQVAPEATVRRFLQGRHCEQSSDCIYGRDCRAPCDRLMRQCKGDLIQPNLAKVCELLRDYLLPGAPAGLYEELGKQLRTCTTLSGLASQIEAHHSLVLSHLKTLLWREISNTNYS.

Residues 1–30 lie on the Cytoplasmic side of the membrane; it reads MRRLRRLVHLVLLCPFSKGLQGRLPGLRVK. The May mediate ER retention signature appears at 5 to 6; it reads RR. Residues 31 to 51 form a helical membrane-spanning segment; the sequence is YVLLVWLGIFVGSWMVYVHYS. Over 52–431 the chain is Lumenal; sequence SYSELCRGHV…WREISNTNYS (380 aa). 2 disulfide bridges follow: Cys57–Cys94 and Cys62–Cys117.

Belongs to the DIPK family. Post-translationally, among the many cysteines in the lumenal domain, most are probably involved in disulfide bonds. In terms of tissue distribution, expressed in kidney, testis, lung, heart, stomach, intestine, pancreas, liver and salivary gland. Strongly expressed in acute pancreatitis, brain, and in peripheral endothelial cells.

Its subcellular location is the endoplasmic reticulum membrane. The sequence is that of Divergent protein kinase domain 1B (Dipk1b) from Mus musculus (Mouse).